A 263-amino-acid polypeptide reads, in one-letter code: MLIEQLWTANAYRNFNYLIACPETGEALAIDPLDHRQCLATAKRNGWRITQIFNTHEHGDHTGGNEAIIAQTKGKLLAHHKARDKIRGIDEGLAAGDTVKVGNGVALKVLDTPGHTMSHLCLFAPSNPPALFCGDTLFNAGAGNCHNGGDPNALYATFTQQLALLPCNTRIYPGHEYIENNLGFTLDREPDNEQAMALLAEVKSQDPNHAFVSTLALEKEINTFFRLDNPTLITKLRETFPDLPRVPDPKTVFLKLRELRNKW.

Residues His56, His58, Asp60, His61, His115, Asp135, and His175 each contribute to the Zn(2+) site.

The protein belongs to the metallo-beta-lactamase superfamily. Glyoxalase II family. In terms of assembly, monomer. Zn(2+) is required as a cofactor.

It catalyses the reaction an S-(2-hydroxyacyl)glutathione + H2O = a 2-hydroxy carboxylate + glutathione + H(+). The protein operates within secondary metabolite metabolism; methylglyoxal degradation; (R)-lactate from methylglyoxal: step 2/2. Thiolesterase that catalyzes the hydrolysis of S-D-lactoyl-glutathione to form glutathione and D-lactic acid. The sequence is that of Hydroxyacylglutathione hydrolase from Nitrosococcus oceani (strain ATCC 19707 / BCRC 17464 / JCM 30415 / NCIMB 11848 / C-107).